Here is an 806-residue protein sequence, read N- to C-terminus: MSKLTTGSFSIEDLESVQITINNIVGAAKEAAEEKAKELVNAGPTLFAGLESYRDDWNFKLLDRYEPVITPMCDQCCYCTYGPCDLSGNKRGACGIDMLGHNGREFFLRVITGTACHAAHGRHLLDHLIETFGEDLPLNLGQSNVLTPNITISTGLSPKTLGEVKPAMEYVEEQLTQLLATVHAGQESAEIDYDSKALFSGSLDHVGMEISDIVQVTAYDFPRADPEAPLIEIGMGTIDKSKPFLCVIGHNVAGVTYMMDYMEDHDLTDKMEIAGLCCTAIDLTRYKEADRRPPYAKVIGSMSKELKVIRSGMPDVIVVDEQCVRGDIVPEAQKLMIPVIASNPKIMYGLPNRTDADVDETIEELRSGKIPGCVMLDYDKLGEICIRLTMEMAPIRDASGITAIPTDEEFTNWVMKCADCGACMIACPEELDIPEAMGFAKEGDYSYLDILHDQCIGCRRCEQVCKKEIPILNIIEKAAQKQISEEKGLMRAGRGQVSDAEIRAEGLNLVMGTTPGIIAIIGCPNYPEGTKDVYYIAEEFLKRNFIVVTTGCGAMDIGMFKDEDGKTLYERFPGGFECGGLANIGSCVSNAHITGAAEKVAAIFAQRTLEGNLAEIGDYVLNRVGACGLAWGAFSQKASSIGTGCNILGIPAVLGPHSSKYRRALIAKNYEEDKWKVYDARNGQEMAIPPAPEFLLTTAETWQEAIPMMAKACIRPSDNNMGRSIKLTHWMELHKKYLGSKPEDWWKFVRNEADLPLATREALLKELEKEHGWEIDWKRKKVISGPKIKFDVSAQPTNLKRLCKEA.

Residues Cys-73, Cys-76, Cys-77, Cys-79, Cys-84, and Cys-94 each contribute to the [4Fe-4S] cluster site. His-117 serves as a coordination point for CO. 3 residues coordinate [Ni-4Fe-4S] cluster: His-250, Cys-278, and Cys-323. 4Fe-4S ferredoxin-type domains follow at residues 407–436 (DEEF…IPEA) and 446–475 (SYLD…LNII). The [4Fe-4S] cluster site is built by Cys-417, Cys-420, Cys-423, Cys-427, Cys-455, Cys-458, Cys-461, and Cys-465. The [Ni-4Fe-4S] cluster site is built by Cys-523, Cys-552, and Cys-587.

Belongs to the Ni-containing carbon monoxide dehydrogenase family. In terms of assembly, heterotetramer of two alpha and two epsilon subunits. The ACDS complex is made up of alpha, epsilon, beta, gamma and delta subunits with a probable stoichiometry of (alpha(2)epsilon(2))(4)-beta(8)-(gamma(1)delta(1))(8). It depends on [4Fe-4S] cluster as a cofactor. [Ni-4Fe-4S] cluster serves as cofactor.

It catalyses the reaction CO + 2 oxidized [2Fe-2S]-[ferredoxin] + H2O = 2 reduced [2Fe-2S]-[ferredoxin] + CO2 + 2 H(+). It participates in one-carbon metabolism; methanogenesis from acetate. Its activity is regulated as follows. Carbon monoxide dehydrogenase activity is inhibited by KCN and is rapidly inactivated by O(2). Part of the ACDS complex that catalyzes the reversible cleavage of acetyl-CoA, allowing growth on acetate as sole source of carbon and energy. The alpha-epsilon subcomponent functions as a carbon monoxide dehydrogenase. This Methanosarcina barkeri (strain Fusaro / DSM 804) protein is Acetyl-CoA decarbonylase/synthase complex subunit alpha 1.